A 162-amino-acid chain; its full sequence is Ubiquitin-fold modifier-conjugating enzyme 1 (162 aa).

The Glycyl thioester intermediate role is filled by C115.

Belongs to the ubiquitin-conjugating enzyme family. UFC1 subfamily. In terms of assembly, interacts with uba-5.

In terms of biological role, E2-like enzyme which forms an intermediate with ufm-1. The intermediate is formed via a thioester linkage. The polypeptide is Ubiquitin-fold modifier-conjugating enzyme 1 (Caenorhabditis briggsae).